Consider the following 403-residue polypeptide: Na(+)-translocating NADH-quinone reductase subunit B (403 aa).

9 helical membrane-spanning segments follow: residues M56–G76, A121–F141, I163–I183, W220–I240, T265–W285, I287–S307, M312–F332, W348–F368, and G371–V391. T230 carries the post-translational modification FMN phosphoryl threonine.

It belongs to the NqrB/RnfD family. Composed of six subunits; NqrA, NqrB, NqrC, NqrD, NqrE and NqrF. FMN is required as a cofactor.

It is found in the cell inner membrane. It carries out the reaction a ubiquinone + n Na(+)(in) + NADH + H(+) = a ubiquinol + n Na(+)(out) + NAD(+). Its function is as follows. NQR complex catalyzes the reduction of ubiquinone-1 to ubiquinol by two successive reactions, coupled with the transport of Na(+) ions from the cytoplasm to the periplasm. NqrA to NqrE are probably involved in the second step, the conversion of ubisemiquinone to ubiquinol. This Ectopseudomonas mendocina (strain ymp) (Pseudomonas mendocina) protein is Na(+)-translocating NADH-quinone reductase subunit B.